The primary structure comprises 151 residues: Calmodulin-like protein 9 (151 aa).

4 consecutive EF-hand domains span residues 8-43 (EQIQ…MGKN), 44-79 (PKAE…NTSQ), 81-116 (SASD…MGMK), and 117-151 (ITAE…AASY). Residues aspartate 94, aspartate 96, aspartate 98, glutamate 105, aspartate 130, aspartate 132, aspartate 134, and glutamate 141 each contribute to the Ca(2+) site.

Belongs to the calmodulin family. In terms of assembly, interacts with IQD1. Interacts with ILK1. Binds to ABCG36. Expressed in leaves, flowers and siliques.

Potential calcium sensor. The chain is Calmodulin-like protein 9 from Arabidopsis thaliana (Mouse-ear cress).